A 124-amino-acid chain; its full sequence is Large ribosomal subunit protein bL12 (124 aa).

This sequence belongs to the bacterial ribosomal protein bL12 family. Homodimer. Part of the ribosomal stalk of the 50S ribosomal subunit. Forms a multimeric L10(L12)X complex, where L10 forms an elongated spine to which 2 to 4 L12 dimers bind in a sequential fashion. Binds GTP-bound translation factors.

Forms part of the ribosomal stalk which helps the ribosome interact with GTP-bound translation factors. Is thus essential for accurate translation. The polypeptide is Large ribosomal subunit protein bL12 (Nautilia profundicola (strain ATCC BAA-1463 / DSM 18972 / AmH)).